We begin with the raw amino-acid sequence, 194 residues long: Crossover junction endodeoxyribonuclease RuvC (194 aa).

Residues D7, E68, and D141 contribute to the active site. Positions 7, 68, and 141 each coordinate Mg(2+). The segment at 162-194 (GGEREQHLTAAQRQWAEAAQNSTRRRKNSDRGM) is disordered. Residues 184–194 (TRRRKNSDRGM) are compositionally biased toward basic residues.

This sequence belongs to the RuvC family. As to quaternary structure, homodimer which binds Holliday junction (HJ) DNA. The HJ becomes 2-fold symmetrical on binding to RuvC with unstacked arms; it has a different conformation from HJ DNA in complex with RuvA. In the full resolvosome a probable DNA-RuvA(4)-RuvB(12)-RuvC(2) complex forms which resolves the HJ. The cofactor is Mg(2+).

The protein resides in the cytoplasm. It carries out the reaction Endonucleolytic cleavage at a junction such as a reciprocal single-stranded crossover between two homologous DNA duplexes (Holliday junction).. Its function is as follows. The RuvA-RuvB-RuvC complex processes Holliday junction (HJ) DNA during genetic recombination and DNA repair. Endonuclease that resolves HJ intermediates. Cleaves cruciform DNA by making single-stranded nicks across the HJ at symmetrical positions within the homologous arms, yielding a 5'-phosphate and a 3'-hydroxyl group; requires a central core of homology in the junction. The consensus cleavage sequence is 5'-(A/T)TT(C/G)-3'. Cleavage occurs on the 3'-side of the TT dinucleotide at the point of strand exchange. HJ branch migration catalyzed by RuvA-RuvB allows RuvC to scan DNA until it finds its consensus sequence, where it cleaves and resolves the cruciform DNA. This is Crossover junction endodeoxyribonuclease RuvC from Bifidobacterium longum subsp. infantis (strain ATCC 15697 / DSM 20088 / JCM 1222 / NCTC 11817 / S12).